The primary structure comprises 420 residues: Phosphoglycerate kinase, cytosolic (420 aa).

Positions 23, 24, 25, 26, 39, 61, 62, 64, 65, 135, 171, and 172 each coordinate (2R)-3-phosphoglycerate. Gly217 serves as a coordination point for ADP. Gly217 serves as a coordination point for CDP. Lys219 contacts (2R)-3-phosphoglycerate. An AMP-binding site is contributed by Lys219. Asp222 contributes to the CDP binding site. A Mg(2+)-binding site is contributed by Asp222. ADP is bound by residues Lys223 and Gly241. Lys223 serves as a coordination point for AMP. Position 223 (Lys223) interacts with ATP. Gly241 lines the CDP pocket. Residues Ala242 and Ala314 each coordinate AMP. ATP is bound by residues Ala242 and Ala314. Ala314 and Asn338 together coordinate ADP. The CDP site is built by Gly339 and Phe344. ADP is bound by residues Phe344, Glu345, Asp377, and Ser378. Glu345 contacts AMP. ATP-binding residues include Glu345, Asp377, and Ser378. Mg(2+) is bound at residue Asp377.

It belongs to the phosphoglycerate kinase family. In terms of assembly, monomer. Requires Mg(2+) as cofactor.

The protein localises to the cytoplasm. The enzyme catalyses (2R)-3-phosphoglycerate + ATP = (2R)-3-phospho-glyceroyl phosphate + ADP. It functions in the pathway carbohydrate degradation; glycolysis; pyruvate from D-glyceraldehyde 3-phosphate: step 2/5. The polypeptide is Phosphoglycerate kinase, cytosolic (C1PGK) (Trypanosoma congolense).